The chain runs to 646 residues: Esterase EstA (646 aa).

An N-terminal signal peptide occupies residues 1-24; sequence MIRMALKPLVAACLLASLSTAPQA. Over 25-397 the chain is Extracellular; sequence APSPYSTLVV…DSAASGDGNG (373 aa). The active-site Nucleophile is Ser38. Catalysis depends on residues Asp310 and His313. The 281-residue stretch at 366-646 folds into the Autotransporter domain; it reads QNVGQWRGFV…SVSLALSLDF (281 aa). A beta stranded membrane pass occupies residues 398–408; sequence YNLTLGGSYRI. Topologically, residues 409–410 are periplasmic; the sequence is DE. The beta stranded transmembrane segment at 411 to 421 threads the bilayer; the sequence is AWRAGVAAGFY. The Extracellular portion of the chain corresponds to 422–437; sequence RQKLEAGAKDSDYRMN. Residues 438–447 traverse the membrane as a beta stranded segment; it reads SYMASAFVQY. Residues 448–451 lie on the Periplasmic side of the membrane; that stretch reads QENR. Residues 452–461 traverse the membrane as a beta stranded segment; the sequence is WWADAALTGG. Over 462–488 the chain is Extracellular; the sequence is YLDYDDLKRKFALGGGERSEKGDTNGH. The beta stranded transmembrane segment at 489–500 threads the bilayer; that stretch reads LWAFSARLGYDI. The Periplasmic segment spans residues 501–507; it reads AQQADSP. A beta stranded transmembrane segment spans residues 508–518; that stretch reads WHLSPFVSADY. Topologically, residues 519–547 are extracellular; sequence ARVEVDGYSEKGASATALDYDDQKRSSKR. A beta stranded transmembrane segment spans residues 548-558; that stretch reads LGAGLQGKYAF. At 559 to 561 the chain is on the periplasmic side; the sequence is GSD. Residues 562-571 traverse the membrane as a beta stranded segment; sequence TQLFAEYAHE. Over 572–605 the chain is Extracellular; sequence REYEDDTQDLTMSLNSLPGNRFTLEGYTPQDHLN. The chain crosses the membrane as a beta stranded span at residues 606-615; sequence RVSLGFSQKL. The Periplasmic segment spans residues 616–618; it reads APE. A beta stranded membrane pass occupies residues 619-628; it reads LSLRGGYNWR. The Extracellular segment spans residues 629-636; that stretch reads KGEDDTQQ. A beta stranded membrane pass occupies residues 637–646; that stretch reads SVSLALSLDF.

The protein belongs to the 'GDSL' lipolytic enzyme family.

It localises to the cell outer membrane. It carries out the reaction a carboxylic ester + H2O = an alcohol + a carboxylate + H(+). Functionally, esterase whose enzymatic activity is required for rhamnolipid production, all kinds of cell motility (swimming, swarming, and twitching), and biofilm formation; the exact role of EstA in these processes is unclear. In vitro, has pronounced esterase activities towards p-nitrophenyl esters of short acyl chain length (C4-C6) and Tween detergents. Also shows relatively high activity towards beta-naphthyl butyrate, whereas its activities towards triacylglycerols and acyls-CoA are negligible. In Pseudomonas aeruginosa (strain ATCC 15692 / DSM 22644 / CIP 104116 / JCM 14847 / LMG 12228 / 1C / PRS 101 / PAO1), this protein is Esterase EstA (estA).